A 222-amino-acid chain; its full sequence is MSADPTLIPASPSEDDYVRQVREATPPPLLSEEDPFALFAEWLEEAGKKEPNDPNAMTVSTVDADGMPDSRMVLLKDFDARGFVFYTNTQSAKGQELNAHPKAALLFHWKSLRRQVRIRGTVEPVTEAEADAYFASRARHSQIGAWASDQSQPLPDRHALEKRVAEMGLKFGLGKVPRPPHWSGYRITPVTIEFWRDRPFRLHERLVFDRADGGWTTKRLFP.

Residues 71 to 76 (RMVLLK), 86 to 87 (YT), Lys93, and Gln115 each bind FMN. Lys76 provides a ligand contact to substrate. Substrate is bound by residues Tyr133, Arg137, and Ser141. FMN-binding positions include 150-151 (QS) and Trp195. Position 201–203 (201–203 (RLH)) interacts with substrate. Residue Arg205 coordinates FMN.

It belongs to the pyridoxamine 5'-phosphate oxidase family. In terms of assembly, homodimer. FMN serves as cofactor.

The enzyme catalyses pyridoxamine 5'-phosphate + O2 + H2O = pyridoxal 5'-phosphate + H2O2 + NH4(+). It catalyses the reaction pyridoxine 5'-phosphate + O2 = pyridoxal 5'-phosphate + H2O2. Its pathway is cofactor metabolism; pyridoxal 5'-phosphate salvage; pyridoxal 5'-phosphate from pyridoxamine 5'-phosphate: step 1/1. It participates in cofactor metabolism; pyridoxal 5'-phosphate salvage; pyridoxal 5'-phosphate from pyridoxine 5'-phosphate: step 1/1. Its function is as follows. Catalyzes the oxidation of either pyridoxine 5'-phosphate (PNP) or pyridoxamine 5'-phosphate (PMP) into pyridoxal 5'-phosphate (PLP). The chain is Pyridoxine/pyridoxamine 5'-phosphate oxidase from Caulobacter vibrioides (strain ATCC 19089 / CIP 103742 / CB 15) (Caulobacter crescentus).